The primary structure comprises 141 residues: Large ribosomal subunit protein uL11 (141 aa).

This sequence belongs to the universal ribosomal protein uL11 family. Part of the ribosomal stalk of the 50S ribosomal subunit. Interacts with L10 and the large rRNA to form the base of the stalk. L10 forms an elongated spine to which L12 dimers bind in a sequential fashion forming a multimeric L10(L12)X complex. In terms of processing, one or more lysine residues are methylated.

Its function is as follows. Forms part of the ribosomal stalk which helps the ribosome interact with GTP-bound translation factors. The polypeptide is Large ribosomal subunit protein uL11 (Aliarcobacter butzleri (strain RM4018) (Arcobacter butzleri)).